A 161-amino-acid chain; its full sequence is Protein lin-52 (161 aa).

Positions 137–161 (TGSASPRYLQPTPPKNVAEETTGSQ) are disordered.

It belongs to the lin-52 family. In terms of assembly, component of the DRM complex, at least composed of lin-9, lin-35, lin-37, lin-52, lin-53, lin-54- dpl-1 and efl-1. Interacts with zft-11; the interaction is required to suppress the activation of non-neuronal genes in neurons.

It is found in the nucleus. Functionally, synthetic multivulva class B (synMuvB) protein. SynMuvB proteins are required to repress the induction of vulval development by Ras signaling and probably act by forming the multiprotein DRM complex that represses transcription. In association with the zinc finger protein ztf-11, negatively regulates the expression of non-neuronal genes during neurogenesis. The polypeptide is Protein lin-52 (Caenorhabditis elegans).